The following is a 184-amino-acid chain: Endothelial cell-specific molecule 1 (184 aa).

A signal peptide spans 1-21 (MKSLLLLTTLLVPLHLGMAWS). Positions 24 to 102 (YAVDCPEHCD…GDEFGICKDC (79 aa)) constitute an IGFBP N-terminal domain. 6 cysteine pairs are disulfide-bonded: Cys-28/Cys-51, Cys-32/Cys-53, Cys-37/Cys-54, Cys-43/Cys-57, Cys-65/Cys-83, and Cys-77/Cys-99. A disordered region spans residues 145 to 184 (RTSASHTERDSASGDGNAVREEIGEGNAARPSVMKWLNPR). Positions 150–167 (HTERDSASGDGNAVREEI) are enriched in basic and acidic residues. The O-linked (Xyl...) (chondroitin sulfate) serine glycan is linked to Ser-157.

O-glycosylated; contains chondroitin sulfate and dermatan sulfate.

The protein localises to the secreted. Its function is as follows. Involved in angiogenesis; promotes angiogenic sprouting. May have potent implications in lung endothelial cell-leukocyte interactions. This chain is Endothelial cell-specific molecule 1 (Esm1), found in Mus musculus (Mouse).